The following is a 524-amino-acid chain: MTRRALVSVSDKTGLVPFARRLAALGVELLSTGGTQKTLAEAGVPVVGVGDYTQAPEILGGRVKTLHPRVHGGILYRRGLASDEADVKARDIPPIDLVVVNLYPFREAVAAGKPFETCVEEIDIGGPTMVRSAAKNSAHVGVVVDPADYEKVAAELEATRTLSAATRFYLMKKAFAHTAAYDAAISEYLTAREAPEAAPAHFPATLAAVYTKAYDLRYGENPHQAGAFYRAAREPEEPSVAFADVLQGKELSYNNLLDLQAALAGVMEFDETACVIIKHNTPCGVSTGRTAGEAFARARECDPVSAFGGIVALNRPVDEATASELTSLFLECVIAPGYDAAARAALAVKKNLRLLEAPRLGAARATWRRRPEEGRELRSIPGGLLVMDRDLGSVRRDDCKVMTKRAPTEQEWKDLLFAWKVVKHVKSNAIVFAKDDRTVAIGGGQTSRVESVKTAVMKAALDVRGSSVGSDAFFPFADGVEEIIKAGATAIIQPGGSMRDAEVIAAADKAGIAMVATGMRHFRH.

An MGS-like domain is found at 1–144; the sequence is MTRRALVSVS…KNSAHVGVVV (144 aa).

Belongs to the PurH family.

It carries out the reaction (6R)-10-formyltetrahydrofolate + 5-amino-1-(5-phospho-beta-D-ribosyl)imidazole-4-carboxamide = 5-formamido-1-(5-phospho-D-ribosyl)imidazole-4-carboxamide + (6S)-5,6,7,8-tetrahydrofolate. The catalysed reaction is IMP + H2O = 5-formamido-1-(5-phospho-D-ribosyl)imidazole-4-carboxamide. It participates in purine metabolism; IMP biosynthesis via de novo pathway; 5-formamido-1-(5-phospho-D-ribosyl)imidazole-4-carboxamide from 5-amino-1-(5-phospho-D-ribosyl)imidazole-4-carboxamide (10-formyl THF route): step 1/1. It functions in the pathway purine metabolism; IMP biosynthesis via de novo pathway; IMP from 5-formamido-1-(5-phospho-D-ribosyl)imidazole-4-carboxamide: step 1/1. This is Bifunctional purine biosynthesis protein PurH from Anaeromyxobacter sp. (strain K).